Reading from the N-terminus, the 267-residue chain is 14-3-3-like protein GF14 phi (267 aa).

At A2 the chain carries N-acetylalanine. 2 positions are modified to phosphoserine: S73 and S196. At T217 the chain carries Phosphothreonine. The disordered stretch occupies residues 244–267 (MQDESPEEIKEAAAPKPAEEQKEI). Phosphoserine is present on S248. The span at 250-267 (EEIKEAAAPKPAEEQKEI) shows a compositional bias: basic and acidic residues.

This sequence belongs to the 14-3-3 family. Interacts with FD. Interacts with CINV1.

It localises to the nucleus. It is found in the cytoplasm. Its function is as follows. Is associated with a DNA binding complex that binds to the G box, a well-characterized cis-acting DNA regulatory element found in plant genes. This is 14-3-3-like protein GF14 phi (GRF4) from Arabidopsis thaliana (Mouse-ear cress).